Consider the following 302-residue polypeptide: Lysosomal thioesterase PPT2 (302 aa).

A signal peptide spans 1–27 (MLGLCGQRLPAAWVLLLLPFLPLLLLA). Residue N60 is glycosylated (N-linked (GlcNAc...) asparagine). Disulfide bonds link C109–C117 and C165–C176. The active-site Nucleophile is the S111. N-linked (GlcNAc...) asparagine glycosylation is found at N190 and N206. D228 is an active-site residue. N245 is a glycosylation site (N-linked (GlcNAc...) asparagine). A disulfide bridge connects residues C276 and C296. The active site involves H283. A glycan (N-linked (GlcNAc...) asparagine) is linked at N289.

The protein belongs to the palmitoyl-protein thioesterase family. Broadly expressed, with highest levels in skeletal muscle.

The protein localises to the lysosome. It carries out the reaction hexadecanoyl-CoA + H2O = hexadecanoate + CoA + H(+). The catalysed reaction is S-hexadecanoyl-N-acetylcysteamine + H2O = N-acetylcysteamine + hexadecanoate + H(+). Its function is as follows. Catalyzes the cleavage of thioester bonds from S-palmitoyl-CoA or S-palmitoyl-N-acetylcysteamine (unbranched structures) but does not have activity against palmitoylcysteine or palmitoylated proteins, branched structures or bulky head groups. Conversely, hydrolyzes both long and short chain fatty acyl-CoA substrate. In terms of biological role, catalytically inactive due to lack of active site His-283. This Homo sapiens (Human) protein is Lysosomal thioesterase PPT2.